Reading from the N-terminus, the 720-residue chain is Transcription factor bHLH155 (720 aa).

A compositionally biased stretch (polar residues) spans 522–534 (YPSSSSDQFQTSL). Residues 522–558 (YPSSSSDQFQTSLDIPKKNKKRAKPGESSRPRPRDRQ) form a disordered region. The short motif at 540-547 (NKKRAKPG) is the Nuclear localization signal element. Residues 544-593 (AKPGESSRPRPRDRQLIQDRIKELRELVPNGSKCSIDSLLERTIKHMLFL) form the bHLH domain. A compositionally biased stretch (basic and acidic residues) spans 545–558 (KPGESSRPRPRDRQ).

The protein belongs to the bHLH protein family. LHW subfamily. Homodimer.

It localises to the nucleus. Functionally, transcription factor that may regulate root development. This Arabidopsis thaliana (Mouse-ear cress) protein is Transcription factor bHLH155 (BHLH155).